A 427-amino-acid chain; its full sequence is Probable anaerobic glycerol-3-phosphate dehydrogenase subunit B (427 aa).

Belongs to the anaerobic G-3-P dehydrogenase subunit B family. The cofactor is FMN.

It carries out the reaction a quinone + sn-glycerol 3-phosphate = dihydroxyacetone phosphate + a quinol. The protein operates within polyol metabolism; glycerol degradation via glycerol kinase pathway; glycerone phosphate from sn-glycerol 3-phosphate (anaerobic route): step 1/1. The chain is Probable anaerobic glycerol-3-phosphate dehydrogenase subunit B from Halobacterium salinarum (strain ATCC 29341 / DSM 671 / R1).